Here is a 56-residue protein sequence, read N- to C-terminus: Large ribosomal subunit protein uL30 (56 aa).

It belongs to the universal ribosomal protein uL30 family. In terms of assembly, part of the 50S ribosomal subunit.

This Oleidesulfovibrio alaskensis (strain ATCC BAA-1058 / DSM 17464 / G20) (Desulfovibrio alaskensis) protein is Large ribosomal subunit protein uL30.